The sequence spans 112 residues: MHAIEHNIIKITPIFTYIDSREIGGYSYERFNRNLFKDKAVIFIYDGNEGGFGLAEILYENAEKLLNKSLEHLKNCNCADGCPLCIYSTKCGTFNEFLDKWQAIRILEKLLS.

This is an uncharacterized protein from Methanocaldococcus jannaschii (strain ATCC 43067 / DSM 2661 / JAL-1 / JCM 10045 / NBRC 100440) (Methanococcus jannaschii).